The primary structure comprises 233 residues: Uridylate kinase (233 aa).

An ATP-binding site is contributed by 9 to 10; the sequence is GS. G43 serves as a coordination point for UMP. ATP is bound by residues G44 and R48. UMP is bound by residues D65 and 113–119; that span reads VTPGQTT. The ATP site is built by T139, Y145, and D148.

It belongs to the UMP kinase family. As to quaternary structure, homohexamer.

Its subcellular location is the cytoplasm. It catalyses the reaction UMP + ATP = UDP + ADP. The protein operates within pyrimidine metabolism; CTP biosynthesis via de novo pathway; UDP from UMP (UMPK route): step 1/1. Inhibited by UTP. Catalyzes the reversible phosphorylation of UMP to UDP. The polypeptide is Uridylate kinase (Methanosarcina acetivorans (strain ATCC 35395 / DSM 2834 / JCM 12185 / C2A)).